A 281-amino-acid polypeptide reads, in one-letter code: Eukaryotic translation initiation factor 3 subunit G (281 aa).

The tract at residues 1–32 (MSRPAGRTDWAEEDDETELALPSQTVVKNKDG) is disordered. The 79-residue stretch at 202 to 280 (ATLRVTNVSE…LILRVEFAKK (79 aa)) folds into the RRM domain.

It belongs to the eIF-3 subunit G family. In terms of assembly, component of the eukaryotic translation initiation factor 3 (eIF-3) complex.

The protein localises to the cytoplasm. Functionally, RNA-binding component of the eukaryotic translation initiation factor 3 (eIF-3) complex, which is involved in protein synthesis of a specialized repertoire of mRNAs and, together with other initiation factors, stimulates binding of mRNA and methionyl-tRNAi to the 40S ribosome. The eIF-3 complex specifically targets and initiates translation of a subset of mRNAs involved in cell proliferation. This subunit can bind 18S rRNA. This is Eukaryotic translation initiation factor 3 subunit G from Phaeosphaeria nodorum (strain SN15 / ATCC MYA-4574 / FGSC 10173) (Glume blotch fungus).